We begin with the raw amino-acid sequence, 123 residues long: Cell division protein SepF (123 aa).

It belongs to the SepF family. As to quaternary structure, homodimer. Interacts with FtsZ.

Its subcellular location is the cytoplasm. In terms of biological role, cell division protein that is part of the divisome complex and is recruited early to the Z-ring. Probably stimulates Z-ring formation, perhaps through the cross-linking of FtsZ protofilaments. Its function overlaps with FtsA. The protein is Cell division protein SepF of Tropheryma whipplei (strain TW08/27) (Whipple's bacillus).